Reading from the N-terminus, the 329-residue chain is 3-isopropylmalate dehydrogenase (329 aa).

Positions 83, 93, 114, and 200 each coordinate substrate. D200, D224, and D228 together coordinate Mg(2+). G257–N269 serves as a coordination point for NAD(+).

Belongs to the isocitrate and isopropylmalate dehydrogenases family. In terms of assembly, homotetramer. Mg(2+) serves as cofactor. Mn(2+) is required as a cofactor.

It localises to the cytoplasm. It catalyses the reaction (2R,3S)-3-isopropylmalate + NAD(+) = 4-methyl-2-oxopentanoate + CO2 + NADH. The protein operates within amino-acid biosynthesis; L-leucine biosynthesis; L-leucine from 3-methyl-2-oxobutanoate: step 3/4. In terms of biological role, catalyzes the oxidation of 3-carboxy-2-hydroxy-4-methylpentanoate (3-isopropylmalate) to 3-carboxy-4-methyl-2-oxopentanoate. The product decarboxylates to 4-methyl-2 oxopentanoate. The polypeptide is 3-isopropylmalate dehydrogenase (leuB) (Methanothermobacter thermautotrophicus (strain ATCC 29096 / DSM 1053 / JCM 10044 / NBRC 100330 / Delta H) (Methanobacterium thermoautotrophicum)).